A 231-amino-acid polypeptide reads, in one-letter code: Two-component response regulator ARR3 (231 aa).

The region spanning 34-161 (HVLAVDDSLV…DVKRLRSYLT (128 aa)) is the Response regulatory domain. D94 is subject to 4-aspartylphosphate. A disordered region spans residues 170-231 (GNKRKLTTPP…DSPMRSPGLA (62 aa)). Positions 185–199 (SATSSMESSDSTVES) are enriched in low complexity. Residues 210-221 (LTMSPESATSLV) show a composition bias toward polar residues.

It belongs to the ARR family. Type-A subfamily. Post-translationally, two-component system major event consists of a His-to-Asp phosphorelay between a sensor histidine kinase (HK) and a response regulator (RR). In plants, the His-to-Asp phosphorelay involves an additional intermediate named Histidine-containing phosphotransfer protein (HPt). This multistep phosphorelay consists of a His-Asp-His-Asp sequential transfer of a phosphate group between first a His and an Asp of the HK protein, followed by the transfer to a conserved His of the HPt protein and finally the transfer to an Asp in the receiver domain of the RR protein. In terms of tissue distribution, predominantly expressed in roots.

The protein resides in the nucleus. In terms of biological role, functions as a response regulator involved in His-to-Asp phosphorelay signal transduction system. Phosphorylation of the Asp residue in the receiver domain activates the ability of the protein to promote the transcription of target genes. Type-A response regulators seem to act as negative regulators of the cytokinin signaling. The chain is Two-component response regulator ARR3 (ARR3) from Arabidopsis thaliana (Mouse-ear cress).